A 165-amino-acid polypeptide reads, in one-letter code: Large ribosomal subunit protein uL11 (165 aa).

Arginine 67 is subject to N5-methylarginine.

It belongs to the universal ribosomal protein uL11 family. As to quaternary structure, component of the large ribosomal subunit (LSU). Mature N.crassa ribosomes consist of a small (40S) and a large (60S) subunit. The 40S small subunit contains 1 molecule of ribosomal RNA (18S rRNA) and at least 32 different proteins. The large 60S subunit contains 3 rRNA molecules (26S, 5.8S and 5S rRNA) and at least 42 different proteins.

Its subcellular location is the cytoplasm. Functionally, component of the ribosome, a large ribonucleoprotein complex responsible for the synthesis of proteins in the cell. The small ribosomal subunit (SSU) binds messenger RNAs (mRNAs) and translates the encoded message by selecting cognate aminoacyl-transfer RNA (tRNA) molecules. The large subunit (LSU) contains the ribosomal catalytic site termed the peptidyl transferase center (PTC), which catalyzes the formation of peptide bonds, thereby polymerizing the amino acids delivered by tRNAs into a polypeptide chain. The nascent polypeptides leave the ribosome through a tunnel in the LSU and interact with protein factors that function in enzymatic processing, targeting, and the membrane insertion of nascent chains at the exit of the ribosomal tunnel. The polypeptide is Large ribosomal subunit protein uL11 (rpl-12) (Neurospora crassa (strain ATCC 24698 / 74-OR23-1A / CBS 708.71 / DSM 1257 / FGSC 987)).